The primary structure comprises 450 residues: Na(+)/H(+) antiporter NhaA 2 (450 aa).

The next 12 membrane-spanning stretches (helical) occupy residues 43 to 63 (VGGAVLLVASAVALVWANSPW), 86 to 106 (LTLGTWAADGLLAVFFLVVGL), 124 to 144 (ALPMAAAVGGMVVPALIFVAV), 155 to 175 (GWAIPTATDIAFAVAVLAVIS), 185 to 205 (FLLTLAVVDDLLAVTVIAVFY), 208 to 228 (EINLTALGLSIVPLALFALCV), 234 to 254 (SWWLLLPLGVATWVLVHESGV), 258 to 278 (VAGVLLGFTVPVLRSVAAGGP), 299 to 319 (VAVPVFAFFAAGVAIGGVSGL), 326 to 346 (PITLGIILGLVVGKPVGIFLT), 364 to 384 (WIDVFGVALLAGIGFTVSLLI), and 398 to 418 (FVKVGVLTGSLVAALIAAVLL).

It belongs to the NhaA Na(+)/H(+) (TC 2.A.33) antiporter family.

The protein resides in the cell membrane. It carries out the reaction Na(+)(in) + 2 H(+)(out) = Na(+)(out) + 2 H(+)(in). Its function is as follows. Na(+)/H(+) antiporter that extrudes sodium in exchange for external protons. In Mycobacterium sp. (strain JLS), this protein is Na(+)/H(+) antiporter NhaA 2.